A 609-amino-acid polypeptide reads, in one-letter code: Putative pectinesterase/pectinesterase inhibitor 45 (609 aa).

A helical transmembrane segment spans residues Ile-25–Ala-45. N-linked (GlcNAc...) asparagine glycans are attached at residues Asn-51, Asn-62, Asn-100, Asn-114, Asn-183, Asn-229, Asn-296, Asn-306, Asn-346, and Asn-362. The tract at residues Gln-54–Lys-87 is disordered. The interval Gly-89–Met-241 is pectinesterase inhibitor 45. The interval Asn-296–Glu-593 is pectinesterase 45. Residues Thr-371 and Gln-401 each contribute to the substrate site. Residue Asp-424 is the Proton donor; for pectinesterase activity of the active site. A disulfide bridge links Cys-438 with Cys-458. The active-site Nucleophile; for pectinesterase activity is Asp-445. N-linked (GlcNAc...) asparagine glycosylation is present at Asn-491. Positions 513 and 515 each coordinate substrate.

The protein in the N-terminal section; belongs to the PMEI family. It in the C-terminal section; belongs to the pectinesterase family. Expressed in flower buds and pollen.

The protein resides in the membrane. It catalyses the reaction [(1-&gt;4)-alpha-D-galacturonosyl methyl ester](n) + n H2O = [(1-&gt;4)-alpha-D-galacturonosyl](n) + n methanol + n H(+). It participates in glycan metabolism; pectin degradation; 2-dehydro-3-deoxy-D-gluconate from pectin: step 1/5. Its function is as follows. Acts in the modification of cell walls via demethylesterification of cell wall pectin. The polypeptide is Putative pectinesterase/pectinesterase inhibitor 45 (PME45) (Arabidopsis thaliana (Mouse-ear cress)).